A 53-amino-acid chain; its full sequence is Light-harvesting protein B-808/866 beta chain (53 aa).

At Met1 the chain carries N-formylmethionine. Residues 1-25 (MRDDDDLVPPKWRPLFNNQDWLLHD) are Cytoplasmic-facing. Positions 24 and 42 each coordinate a bacteriochlorophyll. A helical membrane pass occupies residues 26 to 48 (IVVKSFYGFGVIAAIAHLLVYLW). Over 49-53 (KPWLP) the chain is Periplasmic.

Belongs to the antenna complex beta subunit family. The core complex is formed by different alpha and beta chains, binding bacteriochlorophyll molecules, and arranged most probably in tetrameric structures disposed around the reaction center. The non-pigmented gamma chains may constitute additional components.

The protein resides in the cell membrane. In terms of biological role, antenna complexes are light-harvesting systems, which transfer the excitation energy to the reaction centers. The sequence is that of Light-harvesting protein B-808/866 beta chain (puf2B) from Chloroflexus aurantiacus (strain ATCC 29366 / DSM 635 / J-10-fl).